The primary structure comprises 163 residues: Nucleotide-binding protein PMI0103 (163 aa).

This sequence belongs to the YajQ family.

Functionally, nucleotide-binding protein. The chain is Nucleotide-binding protein PMI0103 from Proteus mirabilis (strain HI4320).